The primary structure comprises 443 residues: ATP-dependent protease ATPase subunit HslU (443 aa).

ATP-binding positions include isoleucine 18, 60–65, aspartate 256, glutamate 321, and arginine 393; that span reads GVGKTE.

It belongs to the ClpX chaperone family. HslU subfamily. In terms of assembly, a double ring-shaped homohexamer of HslV is capped on each side by a ring-shaped HslU homohexamer. The assembly of the HslU/HslV complex is dependent on binding of ATP.

Its subcellular location is the cytoplasm. In terms of biological role, ATPase subunit of a proteasome-like degradation complex; this subunit has chaperone activity. The binding of ATP and its subsequent hydrolysis by HslU are essential for unfolding of protein substrates subsequently hydrolyzed by HslV. HslU recognizes the N-terminal part of its protein substrates and unfolds these before they are guided to HslV for hydrolysis. In Buchnera aphidicola subsp. Acyrthosiphon pisum (strain APS) (Acyrthosiphon pisum symbiotic bacterium), this protein is ATP-dependent protease ATPase subunit HslU.